Reading from the N-terminus, the 433-residue chain is Pyroglutamylated RF-amide peptide receptor (433 aa).

The Extracellular segment spans residues 1–46 (MQALNITAEQFSRLLSAHNLTREQFIHRYGLRPLVYTPELPARAKL). N-linked (GlcNAc...) asparagine glycans are attached at residues Asn5 and Asn19. A helical membrane pass occupies residues 47-67 (AFALAGALIFALALFGNSLVI). At 68–81 (YVVTRSKAMRTVTN) the chain is on the cytoplasmic side. A helical transmembrane segment spans residues 82–102 (IFICSLALSDLLIAFFCIPVT). Over 103–120 (MLQNISDKWLGGAFICKM) the chain is Extracellular. The helical transmembrane segment at 121–141 (VPFVQSTAVVTEILTMTCIAV) threads the bilayer. Over 142 to 162 (ERHQGLIHPFKMKWQYTTRRA) the chain is Cytoplasmic. A helical membrane pass occupies residues 163–183 (FTILGVVWLAAIIVGSPMWHV). Residues 184–212 (QRLEIKYDFLYEKEHVCCLEEWASPMHQR) are Extracellular-facing. Residues 213–233 (IYTTFILVILFLLPLVVMLVL) form a helical membrane-spanning segment. Residues 234–271 (YSKIGYELWIKKRVGDSSALQTIHGKEMSKIARKKKRA) are Cytoplasmic-facing. Residues 272 to 292 (VVMMVTVVALFAACWAPFHVV) traverse the membrane as a helical segment. The Extracellular segment spans residues 293-313 (HMMVEYSNFEKEYDDVTIKMV). The chain crosses the membrane as a helical span at residues 314 to 334 (FAVAQTIGFFNSICNPFVYAF). The Cytoplasmic portion of the chain corresponds to 335-433 (MNENFKKNFL…NSTFGSGHEL (99 aa)).

Belongs to the G-protein coupled receptor 1 family. Expressed widely in the brain with high levels in the cortex and hypothalamus, and moderate levels in the brain stem, caudate nucleus, midbrain hippocampus, thalamus, trigeminal ganglia and spinal cord. Particularly strong expression detected in the mitral cell layer of the olfactory bulb, accessory olfactory bulb, island of Calleja and nucleus of the solitary tract. In peripheral tissues, expressed at moderate levels in the eye, liver, kidney, pituitary gland, testis and thymus.

It localises to the cell membrane. Functionally, receptor for the orexigenic neuropeptide QRFP. The activity of this receptor is mediated by G proteins that modulate adenylate cyclase activity and intracellular calcium levels. This Mus musculus (Mouse) protein is Pyroglutamylated RF-amide peptide receptor (Qrfpr).